The primary structure comprises 969 residues: Leucine--tRNA ligase (969 aa).

The 'HIGH' region motif lies at 78–89 (PYPSGEGLHVGH). A 'KMSKS' region motif is present at residues 739–743 (KIGKS). Lys-742 serves as a coordination point for ATP.

The protein belongs to the class-I aminoacyl-tRNA synthetase family.

It localises to the cytoplasm. It catalyses the reaction tRNA(Leu) + L-leucine + ATP = L-leucyl-tRNA(Leu) + AMP + diphosphate. The sequence is that of Leucine--tRNA ligase from Mycobacterium tuberculosis (strain ATCC 25177 / H37Ra).